The chain runs to 65 residues: Large ribosomal subunit protein bL35 (65 aa).

Residues 1–15 show a composition bias toward basic residues; that stretch reads MPKMKTKKSASKRFQ. A disordered region spans residues 1-27; the sequence is MPKMKTKKSASKRFQVRGSGSIKRGQA.

Belongs to the bacterial ribosomal protein bL35 family.

This is Large ribosomal subunit protein bL35 from Bordetella petrii (strain ATCC BAA-461 / DSM 12804 / CCUG 43448).